Consider the following 229-residue polypeptide: Protein fmp52-2, mitochondrial (229 aa).

Residues 1-45 (MTTAAVFGSTGAVGGQILATLLASDAFSSVKTVSRRLPNAQSPKL) constitute a mitochondrion transit peptide.

Belongs to the FMP52 family.

It is found in the mitochondrion outer membrane. This chain is Protein fmp52-2, mitochondrial (fmp522), found in Aspergillus oryzae (strain ATCC 42149 / RIB 40) (Yellow koji mold).